We begin with the raw amino-acid sequence, 522 residues long: Putative thymidine phosphorylase (522 aa).

This sequence belongs to the thymidine/pyrimidine-nucleoside phosphorylase family. Type 2 subfamily.

The enzyme catalyses thymidine + phosphate = 2-deoxy-alpha-D-ribose 1-phosphate + thymine. The sequence is that of Putative thymidine phosphorylase from Albidiferax ferrireducens (strain ATCC BAA-621 / DSM 15236 / T118) (Rhodoferax ferrireducens).